Reading from the N-terminus, the 562-residue chain is Probable sesquiterpene synthase (562 aa).

Mg(2+)-binding residues include D315, D319, and E467. A DDXXD motif motif is present at residues 315-319; it reads DDIYD.

It belongs to the terpene synthase family. Tpsa subfamily. Requires Mg(2+) as cofactor. It depends on Mn(2+) as a cofactor.

Its function is as follows. Sesquiterpene synthase. This is Probable sesquiterpene synthase (STPS) from Santalum murrayanum (Bitter quandong).